Consider the following 314-residue polypeptide: Thymidylate synthase (314 aa).

DUMP contacts are provided by residues arginine 32 and arginine 176–arginine 177. Cysteine 196 functions as the Nucleophile in the catalytic mechanism. DUMP contacts are provided by residues arginine 216–aspartate 219, asparagine 227, and histidine 257–tyrosine 259. Aspartate 219 lines the (6R)-5,10-methylene-5,6,7,8-tetrahydrofolate pocket. Residue alanine 313 coordinates (6R)-5,10-methylene-5,6,7,8-tetrahydrofolate.

The protein belongs to the thymidylate synthase family. Bacterial-type ThyA subfamily. In terms of assembly, homodimer.

The protein localises to the cytoplasm. The enzyme catalyses dUMP + (6R)-5,10-methylene-5,6,7,8-tetrahydrofolate = 7,8-dihydrofolate + dTMP. Its pathway is pyrimidine metabolism; dTTP biosynthesis. Catalyzes the reductive methylation of 2'-deoxyuridine-5'-monophosphate (dUMP) to 2'-deoxythymidine-5'-monophosphate (dTMP) while utilizing 5,10-methylenetetrahydrofolate (mTHF) as the methyl donor and reductant in the reaction, yielding dihydrofolate (DHF) as a by-product. This enzymatic reaction provides an intracellular de novo source of dTMP, an essential precursor for DNA biosynthesis. The chain is Thymidylate synthase from Novosphingobium aromaticivorans (strain ATCC 700278 / DSM 12444 / CCUG 56034 / CIP 105152 / NBRC 16084 / F199).